The primary structure comprises 203 residues: ATP synthase subunit delta, chloroplastic (203 aa).

Belongs to the ATPase delta chain family. In terms of assembly, F-type ATPases have 2 components, F(1) - the catalytic core - and F(0) - the membrane proton channel. F(1) has five subunits: alpha(3), beta(3), gamma(1), delta(1), epsilon(1). CF(0) has four main subunits: a(1), b(1), b'(1) and c(10-14). The alpha and beta chains form an alternating ring which encloses part of the gamma chain. F(1) is attached to F(0) by a central stalk formed by the gamma and epsilon chains, while a peripheral stalk is formed by the delta, b and b' chains.

The protein localises to the plastid. The protein resides in the chloroplast thylakoid membrane. F(1)F(0) ATP synthase produces ATP from ADP in the presence of a proton or sodium gradient. F-type ATPases consist of two structural domains, F(1) containing the extramembraneous catalytic core and F(0) containing the membrane proton channel, linked together by a central stalk and a peripheral stalk. During catalysis, ATP synthesis in the catalytic domain of F(1) is coupled via a rotary mechanism of the central stalk subunits to proton translocation. Functionally, this protein is part of the stalk that links CF(0) to CF(1). It either transmits conformational changes from CF(0) to CF(1) or is implicated in proton conduction. The chain is ATP synthase subunit delta, chloroplastic from Heterosigma akashiwo (strain NIES-293 / 8280G21-1).